We begin with the raw amino-acid sequence, 475 residues long: Ribulose bisphosphate carboxylase large chain (475 aa).

Positions 1-2 (MS) are excised as a propeptide. Proline 3 carries the N-acetylproline modification. Residue lysine 14 is modified to N6,N6,N6-trimethyllysine. Substrate-binding residues include asparagine 123 and threonine 173. Lysine 175 functions as the Proton acceptor in the catalytic mechanism. Lysine 177 contributes to the substrate binding site. The Mg(2+) site is built by lysine 201, aspartate 203, and glutamate 204. The residue at position 201 (lysine 201) is an N6-carboxylysine. The Proton acceptor role is filled by histidine 294. Positions 295, 327, and 379 each coordinate substrate.

This sequence belongs to the RuBisCO large chain family. Type I subfamily. Heterohexadecamer of 8 large chains and 8 small chains; disulfide-linked. The disulfide link is formed within the large subunit homodimers. Requires Mg(2+) as cofactor. The disulfide bond which can form in the large chain dimeric partners within the hexadecamer appears to be associated with oxidative stress and protein turnover.

It localises to the plastid. The protein localises to the chloroplast. It carries out the reaction 2 (2R)-3-phosphoglycerate + 2 H(+) = D-ribulose 1,5-bisphosphate + CO2 + H2O. The catalysed reaction is D-ribulose 1,5-bisphosphate + O2 = 2-phosphoglycolate + (2R)-3-phosphoglycerate + 2 H(+). In terms of biological role, ruBisCO catalyzes two reactions: the carboxylation of D-ribulose 1,5-bisphosphate, the primary event in carbon dioxide fixation, as well as the oxidative fragmentation of the pentose substrate in the photorespiration process. Both reactions occur simultaneously and in competition at the same active site. This Keteleeria davidiana (David's keteleeria) protein is Ribulose bisphosphate carboxylase large chain.